Reading from the N-terminus, the 385-residue chain is Torsin-3A (385 aa).

Positions 1–21 are cleaved as a signal peptide; that stretch reads MFLGALWLLLLLPLRPPGAQG. A glycan (N-linked (GlcNAc...) asparagine) is linked at Asn-110. 155-162 contacts ATP; sequence GWSGTGKN.

This sequence belongs to the ClpA/ClpB family. Torsin subfamily. Interacts with TOR1AIP1. N-glycosylated.

Its subcellular location is the cytoplasm. The protein resides in the endoplasmic reticulum lumen. This Mus musculus (Mouse) protein is Torsin-3A (Tor3a).